A 513-amino-acid polypeptide reads, in one-letter code: MTELTLKPGNATLADWRAIYRGAVPKLDEACRPKIKASAEAVARIVAKGEPVYGINTGFGKLASVRIPAGDLETLQRNIVLSHAAGVGEPMPVAIARLMMALKLASLAQGASGVRPETIDLLQAMLANDVIPVVPAQGSVGASGDLAPLSHMTAVMIGVGECFTPHGRFPAKVAFVSHGLEPVTLGAKEGLALLNGTQFSTAYALAALFEAEVLYQSALVAGALSTDAAKGSDAPFDPRIHLLRKHRGQIETAEALRNLMAGSAIRESHRVGDERVQDPYCLRCQPQVMGAALDVLRKAADTLGTEANGVTDNPLIFAEDDTALSGGNFHAEPVAFAADMIALAVCEIGSLSERRIAMLVDPALSGMPAFLTPKPGLNSGFMIPQVTAAALVSENKQKAYPASVDSIPTSANQEDHVSMAAHGARRLIGMVENATAVIGIELLAAAQGCDFHQPLASSDALEAVRKLVRAEVPHLDNDRHFHPDMEKAIAMVRSGATVRAAGAVALPSIAGAA.

The segment at residues 142 to 144 is a cross-link (5-imidazolinone (Ala-Gly)); it reads ASG. Serine 143 bears the 2,3-didehydroalanine (Ser) mark.

Belongs to the PAL/histidase family. Contains an active site 4-methylidene-imidazol-5-one (MIO), which is formed autocatalytically by cyclization and dehydration of residues Ala-Ser-Gly.

It localises to the cytoplasm. It carries out the reaction L-histidine = trans-urocanate + NH4(+). The protein operates within amino-acid degradation; L-histidine degradation into L-glutamate; N-formimidoyl-L-glutamate from L-histidine: step 1/3. This is Histidine ammonia-lyase from Mesorhizobium japonicum (strain LMG 29417 / CECT 9101 / MAFF 303099) (Mesorhizobium loti (strain MAFF 303099)).